A 285-amino-acid polypeptide reads, in one-letter code: Protoheme IX farnesyltransferase (285 aa).

7 consecutive transmembrane segments (helical) span residues 16–36 (AKPKVVSLLDVVAIASYILAF), 40–60 (WYNLIPVLIGGSIAAGGSMII), 106–126 (LLANPLTAFFILLGSLVYVFV), 136–156 (WLNIVIGGFAGSAAAWAGYAA), 165–185 (SLLLGLLVFAWTPGHFWALAL), 217–237 (ILMIPFALGLMLYLNLIYVII), and 265–285 (YKFSAPYLAIVMIAAVISFIL).

This sequence belongs to the UbiA prenyltransferase family. Protoheme IX farnesyltransferase subfamily.

It is found in the cell membrane. The enzyme catalyses heme b + (2E,6E)-farnesyl diphosphate + H2O = Fe(II)-heme o + diphosphate. Its pathway is porphyrin-containing compound metabolism; heme O biosynthesis; heme O from protoheme: step 1/1. Its function is as follows. Converts heme B (protoheme IX) to heme O by substitution of the vinyl group on carbon 2 of heme B porphyrin ring with a hydroxyethyl farnesyl side group. The protein is Protoheme IX farnesyltransferase of Sulfolobus acidocaldarius (strain ATCC 33909 / DSM 639 / JCM 8929 / NBRC 15157 / NCIMB 11770).